We begin with the raw amino-acid sequence, 233 residues long: Large ribosomal subunit protein uL1 (233 aa).

The protein belongs to the universal ribosomal protein uL1 family. In terms of assembly, part of the 50S ribosomal subunit.

Its function is as follows. Binds directly to 23S rRNA. The L1 stalk is quite mobile in the ribosome, and is involved in E site tRNA release. Functionally, protein L1 is also a translational repressor protein, it controls the translation of the L11 operon by binding to its mRNA. This chain is Large ribosomal subunit protein uL1, found in Proteus mirabilis (strain HI4320).